Here is a 224-residue protein sequence, read N- to C-terminus: 7-cyano-7-deazaguanine synthase (224 aa).

9-19 is an ATP binding site; the sequence is ISGGMDSTLCA. Cys-190, Cys-198, Cys-201, and Cys-204 together coordinate Zn(2+).

The protein belongs to the QueC family. The cofactor is Zn(2+).

The catalysed reaction is 7-carboxy-7-deazaguanine + NH4(+) + ATP = 7-cyano-7-deazaguanine + ADP + phosphate + H2O + H(+). Its pathway is purine metabolism; 7-cyano-7-deazaguanine biosynthesis. Functionally, catalyzes the ATP-dependent conversion of 7-carboxy-7-deazaguanine (CDG) to 7-cyano-7-deazaguanine (preQ(0)). The chain is 7-cyano-7-deazaguanine synthase from Campylobacter jejuni subsp. doylei (strain ATCC BAA-1458 / RM4099 / 269.97).